Here is a 167-residue protein sequence, read N- to C-terminus: SsrA-binding protein (167 aa).

The tract at residues 139 to 167 is disordered; the sequence is QAHDKRHAEKEREWQRDKQRIMRAHNRNA. Residues 144–158 show a composition bias toward basic and acidic residues; sequence RHAEKEREWQRDKQR.

This sequence belongs to the SmpB family.

It is found in the cytoplasm. Required for rescue of stalled ribosomes mediated by trans-translation. Binds to transfer-messenger RNA (tmRNA), required for stable association of tmRNA with ribosomes. tmRNA and SmpB together mimic tRNA shape, replacing the anticodon stem-loop with SmpB. tmRNA is encoded by the ssrA gene; the 2 termini fold to resemble tRNA(Ala) and it encodes a 'tag peptide', a short internal open reading frame. During trans-translation Ala-aminoacylated tmRNA acts like a tRNA, entering the A-site of stalled ribosomes, displacing the stalled mRNA. The ribosome then switches to translate the ORF on the tmRNA; the nascent peptide is terminated with the 'tag peptide' encoded by the tmRNA and targeted for degradation. The ribosome is freed to recommence translation, which seems to be the essential function of trans-translation. The sequence is that of SsrA-binding protein from Xylella fastidiosa (strain 9a5c).